A 157-amino-acid chain; its full sequence is MVQVVEVLVPGGQASPGPPLGPAIGPLGLNVKQVVDKINEATKDYEGLSVPVKIIVKDDRSFEIEVGIPPVSALIKRELGIEKGASNPGREVVGNLTMEQLLNIARIKRQQSLSYTLKEVVKEVLGTCNSMGITVEGKSPKELTRMIEEGQVEIPEE.

This sequence belongs to the universal ribosomal protein uL11 family. As to quaternary structure, part of the ribosomal stalk of the 50S ribosomal subunit. Interacts with L10 and the large rRNA to form the base of the stalk. L10 forms an elongated spine to which L12 dimers bind in a sequential fashion forming a multimeric L10(L12)X complex.

Functionally, forms part of the ribosomal stalk which helps the ribosome interact with GTP-bound translation factors. This is Large ribosomal subunit protein uL11 from Archaeoglobus fulgidus (strain ATCC 49558 / DSM 4304 / JCM 9628 / NBRC 100126 / VC-16).